The following is a 445-amino-acid chain: Methionine aminopeptidase 2-3 (445 aa).

Residues 14–115 (ISDADANGAD…ENRYRTTSEE (102 aa)) form a disordered region. The span at 38 to 47 (EDDDSDDDVA) shows a compositional bias: acidic residues. Residues 60-75 (AKKKKNKKRKPKKKQP) show a composition bias toward basic residues. A compositionally biased stretch (polar residues) spans 85-95 (PLSQLFPNNTY). Over residues 97-115 (KGEEVEYKDENRYRTTSEE) the composition is skewed to basic and acidic residues. His-198 is a binding site for substrate. Positions 218, 229, and 298 each coordinate a divalent metal cation. His-306 is a binding site for substrate. A divalent metal cation contacts are provided by Glu-331 and Glu-426.

Belongs to the peptidase M24A family. Methionine aminopeptidase eukaryotic type 2 subfamily. The cofactor is Co(2+). It depends on Zn(2+) as a cofactor. Mn(2+) is required as a cofactor. Fe(2+) serves as cofactor.

It localises to the cytoplasm. It catalyses the reaction Release of N-terminal amino acids, preferentially methionine, from peptides and arylamides.. In terms of biological role, cotranslationally removes the N-terminal methionine from nascent proteins. The N-terminal methionine is often cleaved when the second residue in the primary sequence is small and uncharged (Met-Ala-, Cys, Gly, Pro, Ser, Thr, or Val). The chain is Methionine aminopeptidase 2-3 from Neosartorya fischeri (strain ATCC 1020 / DSM 3700 / CBS 544.65 / FGSC A1164 / JCM 1740 / NRRL 181 / WB 181) (Aspergillus fischerianus).